Here is a 382-residue protein sequence, read N- to C-terminus: D-galactonate dehydratase (382 aa).

Residue Asp183 participates in Mg(2+) binding. The active-site Proton donor is His185. Mg(2+)-binding residues include Glu209 and Glu235. His285 serves as the catalytic Proton acceptor.

Belongs to the mandelate racemase/muconate lactonizing enzyme family. GalD subfamily. It depends on Mg(2+) as a cofactor.

It catalyses the reaction D-galactonate = 2-dehydro-3-deoxy-D-galactonate + H2O. It participates in carbohydrate acid metabolism; D-galactonate degradation; D-glyceraldehyde 3-phosphate and pyruvate from D-galactonate: step 1/3. In terms of biological role, catalyzes the dehydration of D-galactonate to 2-keto-3-deoxy-D-galactonate. This is D-galactonate dehydratase from Salmonella choleraesuis (strain SC-B67).